Here is a 781-residue protein sequence, read N- to C-terminus: Phenylalanine--tRNA ligase beta subunit (781 aa).

Positions 39–147 constitute a tRNA-binding domain; it reads APPFNDVVVA…DDAPVGEDLR (109 aa). A B5 domain is found at 398 to 473; sequence PRREPIELRL…RLFGYDRIPA (76 aa). Mg(2+) contacts are provided by D451, D457, E460, and E461. One can recognise an FDX-ACB domain in the interval 687 to 780; that stretch reads SRFPQVRRDL…AARRCSATLR (94 aa).

Belongs to the phenylalanyl-tRNA synthetase beta subunit family. Type 1 subfamily. Tetramer of two alpha and two beta subunits. It depends on Mg(2+) as a cofactor.

The protein resides in the cytoplasm. The enzyme catalyses tRNA(Phe) + L-phenylalanine + ATP = L-phenylalanyl-tRNA(Phe) + AMP + diphosphate + H(+). This chain is Phenylalanine--tRNA ligase beta subunit, found in Thiobacillus denitrificans (strain ATCC 25259 / T1).